Consider the following 134-residue polypeptide: Phosphoribosyl-AMP cyclohydrolase (134 aa).

Aspartate 80 is a binding site for Mg(2+). Cysteine 81 lines the Zn(2+) pocket. Positions 82 and 84 each coordinate Mg(2+). Zn(2+)-binding residues include cysteine 98 and cysteine 105.

The protein belongs to the PRA-CH family. As to quaternary structure, homodimer. Mg(2+) is required as a cofactor. Requires Zn(2+) as cofactor.

It is found in the cytoplasm. It catalyses the reaction 1-(5-phospho-beta-D-ribosyl)-5'-AMP + H2O = 1-(5-phospho-beta-D-ribosyl)-5-[(5-phospho-beta-D-ribosylamino)methylideneamino]imidazole-4-carboxamide. It participates in amino-acid biosynthesis; L-histidine biosynthesis; L-histidine from 5-phospho-alpha-D-ribose 1-diphosphate: step 3/9. Its function is as follows. Catalyzes the hydrolysis of the adenine ring of phosphoribosyl-AMP. This Bordetella petrii (strain ATCC BAA-461 / DSM 12804 / CCUG 43448) protein is Phosphoribosyl-AMP cyclohydrolase.